Here is a 372-residue protein sequence, read N- to C-terminus: Cytochrome b (372 aa).

4 helical membrane passes run 25–45, 69–90, 105–125, and 170–190; these read FGSM…FLAI, WIMQ…YIHI, WLSG…GYVL, and FFAL…IHII. Heme b-binding residues include His-75 and His-89. Residues His-174 and His-188 each contribute to the heme b site. Residue His-193 coordinates a ubiquinone. The next 4 membrane-spanning stretches (helical) occupy residues 218–238, 280–300, 312–332, and 339–358; these read YKDM…LSFS, LGGT…PFTH, LSQA…WTAS, and FVTI…ITIP.

This sequence belongs to the cytochrome b family. As to quaternary structure, the cytochrome bc1 complex contains 3 respiratory subunits (MT-CYB, CYC1 and UQCRFS1), 2 core proteins (UQCRC1 and UQCRC2) and probably 6 low-molecular weight proteins. Heme b serves as cofactor.

Its subcellular location is the mitochondrion inner membrane. Component of the ubiquinol-cytochrome c reductase complex (complex III or cytochrome b-c1 complex) that is part of the mitochondrial respiratory chain. The b-c1 complex mediates electron transfer from ubiquinol to cytochrome c. Contributes to the generation of a proton gradient across the mitochondrial membrane that is then used for ATP synthesis. This is Cytochrome b (MT-CYB) from Naja multifasciata (Burrowing cobra).